Here is a 286-residue protein sequence, read N- to C-terminus: MTHNHDPYSDAKELAGLTLGKATDYQAEYDASLLQGVPRSLNRNAINLTAESLPFHGADIWTAYELSWLNAKGKPMVAIADIQLSHESQNLIESKSFKLYLNSFNQTKFDNIDAVQKTLVQDLSECAQGQVTVKIIEPKSFGIQRVVELPGTCIDDLDIEVSDYDFNPDYLENSTDDKQIVAETLNSNLLKSNCLITSQPDWGSVMIRYQGPKIDREKLLRYLISFRQHNEFHEQCVERIFVDLKHYCHCTKLTVYARYTRRGGLDINPYRSDFEHPGESHRLARQ.

Substrate is bound at residue 92–94 (IES). 94 to 95 (SK) is a binding site for NADPH. Residue Cys194 is the Thioimide intermediate of the active site. Catalysis depends on Asp201, which acts as the Proton donor. Residue 233–234 (HE) coordinates substrate. Position 262 to 263 (262 to 263 (RG)) interacts with NADPH.

The protein belongs to the GTP cyclohydrolase I family. QueF type 2 subfamily. As to quaternary structure, homodimer.

The protein resides in the cytoplasm. The enzyme catalyses 7-aminomethyl-7-carbaguanine + 2 NADP(+) = 7-cyano-7-deazaguanine + 2 NADPH + 3 H(+). It functions in the pathway tRNA modification; tRNA-queuosine biosynthesis. Catalyzes the NADPH-dependent reduction of 7-cyano-7-deazaguanine (preQ0) to 7-aminomethyl-7-deazaguanine (preQ1). This is NADPH-dependent 7-cyano-7-deazaguanine reductase from Shewanella sp. (strain MR-4).